The following is a 348-amino-acid chain: UDP-3-O-acylglucosamine N-acyltransferase (348 aa).

Catalysis depends on histidine 241, which acts as the Proton acceptor.

This sequence belongs to the transferase hexapeptide repeat family. LpxD subfamily. As to quaternary structure, homotrimer.

The enzyme catalyses a UDP-3-O-[(3R)-3-hydroxyacyl]-alpha-D-glucosamine + a (3R)-hydroxyacyl-[ACP] = a UDP-2-N,3-O-bis[(3R)-3-hydroxyacyl]-alpha-D-glucosamine + holo-[ACP] + H(+). The protein operates within bacterial outer membrane biogenesis; LPS lipid A biosynthesis. Its function is as follows. Catalyzes the N-acylation of UDP-3-O-acylglucosamine using 3-hydroxyacyl-ACP as the acyl donor. Is involved in the biosynthesis of lipid A, a phosphorylated glycolipid that anchors the lipopolysaccharide to the outer membrane of the cell. The protein is UDP-3-O-acylglucosamine N-acyltransferase of Neisseria meningitidis serogroup C (strain 053442).